The chain runs to 338 residues: Beta-ketoacyl-[acyl-carrier-protein] synthase III (338 aa).

Catalysis depends on residues Cys119 and His261. The segment at 262–266 (QANQR) is ACP-binding. The active site involves Asn291.

It belongs to the thiolase-like superfamily. FabH family. In terms of assembly, homodimer.

It localises to the cytoplasm. It catalyses the reaction malonyl-[ACP] + acetyl-CoA + H(+) = 3-oxobutanoyl-[ACP] + CO2 + CoA. It functions in the pathway lipid metabolism; fatty acid biosynthesis. Functionally, catalyzes the condensation reaction of fatty acid synthesis by the addition to an acyl acceptor of two carbons from malonyl-ACP. Catalyzes the first condensation reaction which initiates fatty acid synthesis and may therefore play a role in governing the total rate of fatty acid production. Possesses both acetoacetyl-ACP synthase and acetyl transacylase activities. Its substrate specificity determines the biosynthesis of branched-chain and/or straight-chain of fatty acids. The polypeptide is Beta-ketoacyl-[acyl-carrier-protein] synthase III (Prochlorococcus marinus (strain NATL2A)).